We begin with the raw amino-acid sequence, 1067 residues long: Chitinase-like protein C25A8.4 (1067 aa).

Positions 1-18 (MGIKTLIWLSILVVGIYC) are cleaved as a signal peptide. 3 consecutive GH18 domains span residues 26 to 364 (PVHY…IRNT), 372 to 727 (CTRL…QVCQ), and 743 to 1067 (FVVS…HKCR). An intrachain disulfide couples C30 to C51. 2 N-linked (GlcNAc...) asparagine glycosylation sites follow: N47 and N216. C376 and C397 form a disulfide bridge. N-linked (GlcNAc...) asparagine glycosylation is found at N475, N538, and N710. C747 and C768 are joined by a disulfide. N-linked (GlcNAc...) asparagine glycans are attached at residues N797 and N830. E855 acts as the Proton donor in catalysis. 3 N-linked (GlcNAc...) asparagine glycosylation sites follow: N887, N933, and N1010.

Belongs to the glycosyl hydrolase 18 family.

Its subcellular location is the secreted. In terms of biological role, putative chitinase. The polypeptide is Chitinase-like protein C25A8.4 (cht-3) (Caenorhabditis elegans).